Consider the following 34-residue polypeptide: Mytilin-B (34 aa).

4 disulfides stabilise this stretch: Cys2–Cys27, Cys6–Cys29, Cys10–Cys31, and Cys15–Cys34.

Its subcellular location is the secreted. In terms of biological role, has antibacterial and antiviral activity. This is Mytilin-B from Mytilus edulis (Blue mussel).